Consider the following 578-residue polypeptide: Probable lysosomal cobalamin transporter (578 aa).

2 consecutive transmembrane segments (helical) span residues 8 to 28 (LIWV…SVFI) and 46 to 66 (IFAI…VALV). N70 carries an N-linked (GlcNAc...) asparagine glycan. 2 consecutive transmembrane segments (helical) span residues 95 to 115 (VVYY…IPFT) and 145 to 165 (TITF…VPVA). Residue N168 is glycosylated (N-linked (GlcNAc...) asparagine). 6 consecutive transmembrane segments (helical) span residues 188–208 (ALTF…VLYT), 312–332 (LLGG…MLLT), 347–367 (GYIL…VQAA), 375–395 (VIFT…IAIV), 419–439 (LTTA…SMVV), and 506–526 (FFGV…LIVV). A disordered region spans residues 539-578 (RQMDEDAEEAEEEGLLASTGRRLDTAWQDITGRSNRQRDS). Acidic residues predominate over residues 540–552 (QMDEDAEEAEEEG).

The protein belongs to the LIMR family. LMBRD1 subfamily.

It localises to the lysosome membrane. Functionally, probable lysosomal cobalamin transporter. Required to export cobalamin from lysosomes allowing its conversion to cofactors. This Aspergillus terreus (strain NIH 2624 / FGSC A1156) protein is Probable lysosomal cobalamin transporter.